The sequence spans 235 residues: Nuclear egress protein 2 (235 aa).

Residues 1–214 (MNSTRLVYEL…IKPWTLSKKN (214 aa)) lie on the Perinuclear space side of the membrane. The helical transmembrane segment at 215 to 232 (IWTIILSLVAVVAIILKW) threads the bilayer. The Nuclear portion of the chain corresponds to 233 to 235 (REL).

This sequence belongs to the herpesviridae NEC2 protein family. As to quaternary structure, forms a heterohexameric complex with NEC1. Post-translationally, phosphorylated.

It localises to the host nucleus inner membrane. In terms of biological role, plays an essential role in virion nuclear egress, the first step of virion release from infected cell. Within the host nucleus, NEC1 interacts with the newly formed capsid through the vertexes and directs it to the inner nuclear membrane by associating with NEC2. Induces the budding of the capsid at the inner nuclear membrane as well as its envelopment into the perinuclear space. There, the NEC1/NEC2 complex promotes the fusion of the enveloped capsid with the outer nuclear membrane and the subsequent release of the viral capsid into the cytoplasm where it will reach the secondary budding sites in the host Golgi or trans-Golgi network. This is Nuclear egress protein 2 from Saimiri sciureus (Common squirrel monkey).